The following is a 332-amino-acid chain: Methionine import ATP-binding protein MetN (332 aa).

The ABC transporter domain occupies 2–241 (IELKGLTKVF…PGSRLRELFY (240 aa)). 38–45 (GQSGAGKS) serves as a coordination point for ATP.

This sequence belongs to the ABC transporter superfamily. Methionine importer (TC 3.A.1.24) family. The complex is composed of two ATP-binding proteins (MetN), two transmembrane proteins (MetI) and a solute-binding protein (MetQ).

The protein resides in the cell membrane. It carries out the reaction L-methionine(out) + ATP + H2O = L-methionine(in) + ADP + phosphate + H(+). It catalyses the reaction D-methionine(out) + ATP + H2O = D-methionine(in) + ADP + phosphate + H(+). Part of the ABC transporter complex MetNIQ involved in methionine import. Responsible for energy coupling to the transport system. The chain is Methionine import ATP-binding protein MetN from Symbiobacterium thermophilum (strain DSM 24528 / JCM 14929 / IAM 14863 / T).